Here is a 514-residue protein sequence, read N- to C-terminus: MSLTEEIKKRRTFAIISHPDAGKTTITEQLLYFGGEIREAGTVKGKKSGTFAKSDWMDIEKQRGISVTSSVMQFDYAGKRVNILDTPGHEDFSEDTYRTLMAVDAAVMVVDSAKGIEAQTKKLFEVVKHRNIPVFTFINKLDRDGREPLELLEELEEVLGIASYPMNWPIGMGRAFEGLYDLHNKRLELYKGDERFASIEDGDQLFANNPFYEQVKEDIELLQEAGNVFSEQAILDGDLTPVFFGSALTNFGVQTFLDTFLEFAPEPHGHKTTEGNVVDPLAKDFSGFVFKIQANMDPKHRDRIAFVRIVSGEFERGMGVNLTRTGKGAKLSNVTQFMAESRENVTNAVAGDIIGVYDTGTYQVGDTLTVGKNKFEFEPLPTFTPEIFMKVSPKNVMKQKSFHKGIEQLVQEGAIQLYKNYQTGEYMLGAVGQLQFEVFKHRMEGEYNAEVVMTPMGKKTVRWISEDDLDQRMSSSRNILAKDRFDQPVFLFENDFALRWFADKYPDVTLEEKM.

One can recognise a tr-type G domain in the interval 8-268 (KKRRTFAIIS…TFLEFAPEPH (261 aa)). GTP contacts are provided by residues 17–24 (SHPDAGKT), 85–89 (DTPGH), and 139–142 (NKLD).

It belongs to the TRAFAC class translation factor GTPase superfamily. Classic translation factor GTPase family. PrfC subfamily.

The protein resides in the cytoplasm. In terms of biological role, increases the formation of ribosomal termination complexes and stimulates activities of RF-1 and RF-2. It binds guanine nucleotides and has strong preference for UGA stop codons. It may interact directly with the ribosome. The stimulation of RF-1 and RF-2 is significantly reduced by GTP and GDP, but not by GMP. The polypeptide is Peptide chain release factor 3 (Streptococcus pyogenes serotype M28 (strain MGAS6180)).